The chain runs to 139 residues: Protein archease (139 aa).

3 residues coordinate Ca(2+): D12, D138, and I139.

It belongs to the archease family.

Its function is as follows. Activates the tRNA-splicing ligase complex by facilitating the enzymatic turnover of catalytic subunit RtcB. Acts by promoting the guanylylation of RtcB, a key intermediate step in tRNA ligation. Can also alter the NTP specificity of RtcB such that ATP, dGTP or ITP is used efficiently. The protein is Protein archease of Saccharolobus islandicus (strain L.S.2.15 / Lassen #1) (Sulfolobus islandicus).